The sequence spans 399 residues: Phosphoglycerate kinase (399 aa).

Residues 22–24 (DLN), R37, 60–63 (HFGR), R119, and R152 each bind substrate. ATP contacts are provided by residues K202, E324, and 354-357 (GGDT).

The protein belongs to the phosphoglycerate kinase family. Monomer.

It is found in the cytoplasm. The catalysed reaction is (2R)-3-phosphoglycerate + ATP = (2R)-3-phospho-glyceroyl phosphate + ADP. It functions in the pathway carbohydrate degradation; glycolysis; pyruvate from D-glyceraldehyde 3-phosphate: step 2/5. This chain is Phosphoglycerate kinase, found in Sinorhizobium medicae (strain WSM419) (Ensifer medicae).